The chain runs to 413 residues: Multidrug resistance protein MdtM (413 aa).

The Cytoplasmic portion of the chain corresponds to 1 to 14; that stretch reads MQRIIQFFSQRATT. Residues 15 to 35 traverse the membrane as a helical segment; sequence LFFPMALILYDFAAYLTTDLI. Topologically, residues 36 to 51 are periplasmic; that stretch reads QPGIINVVRDFNADVS. Residues 52 to 72 form a helical membrane-spanning segment; the sequence is LAPASVSLYLAGGMALQWLLG. The Cytoplasmic portion of the chain corresponds to 73-81; it reads PLSDRIGRR. The chain crosses the membrane as a helical span at residues 82 to 102; the sequence is PVLIAGALIFTLACAATLLTT. Topologically, residues 103–106 are periplasmic; it reads SMTQ. A helical membrane pass occupies residues 107-127; the sequence is FLVARFVQGTSICFIATVGYV. Topologically, residues 128–140 are cytoplasmic; the sequence is TVQEAFGQTKAIK. The helical transmembrane segment at 141 to 161 threads the bilayer; sequence LMAIITSIVLVAPVIGPLSGA. Residues 162–170 are Periplasmic-facing; it reads ALMHFVHWK. The chain crosses the membrane as a helical span at residues 171–191; that stretch reads VLFGIIAVMGLLALCGLLLAM. Over 192–225 the chain is Cytoplasmic; sequence PETVQRGAVPFSAVSVLRDFRNVFRNPIFLTGAA. Residues 226 to 246 traverse the membrane as a helical segment; sequence TLSLSYIPMMSWVAVSPVILI. Over 247-254 the chain is Periplasmic; the sequence is DAGGMSTS. The helical transmembrane segment at 255–275 threads the bilayer; sequence QFAWAQVPVFGAVIVANMIVV. Over 276 to 289 the chain is Cytoplasmic; it reads RLVKDPTRPRFIWR. The next 2 membrane-spanning stretches (helical) occupy residues 290-310 and 311-331; these read AVPIQLSGLATLLLGNLLLPH and VWLWSVLGTSLYAFGIGMIFP. Topologically, residues 332–351 are cytoplasmic; sequence TLFRFTLFSNNLPKGTVSAS. The helical transmembrane segment at 352–372 threads the bilayer; the sequence is LNMVILTVMAVSVEVGRWLWF. At 373-376 the chain is on the periplasmic side; that stretch reads HGGR. The helical transmembrane segment at 377–397 threads the bilayer; it reads LPFHLLAAVAGVIVVFTLATL. Over 398-413 the chain is Cytoplasmic; it reads LQRVRQHEAAELAAEK.

It belongs to the major facilitator superfamily.

The protein localises to the cell inner membrane. Proton-dependent efflux pump. Confers resistance to a broad spectrum of chemically unrelated substrates. The chain is Multidrug resistance protein MdtM (mdtM) from Salmonella typhimurium (strain LT2 / SGSC1412 / ATCC 700720).